A 363-amino-acid chain; its full sequence is Pyrimidine monooxygenase RutA (363 aa).

Residues 49–50, asparagine 115, glutamate 124, 140–141, and serine 190 contribute to the FMN site; these read IK and RY.

This sequence belongs to the NtaA/SnaA/DszA monooxygenase family. RutA subfamily.

It catalyses the reaction uracil + FMNH2 + NADH + O2 = (Z)-3-ureidoacrylate + FMN + NAD(+) + H2O + H(+). The enzyme catalyses thymine + FMNH2 + NADH + O2 = (Z)-2-methylureidoacrylate + FMN + NAD(+) + H2O + H(+). Functionally, catalyzes the pyrimidine ring opening between N-3 and C-4 by an unusual flavin hydroperoxide-catalyzed mechanism, adding oxygen atoms in the process to yield ureidoacrylate peracid, that immediately reacts with FMN forming ureidoacrylate and FMN-N(5)-oxide. The FMN-N(5)-oxide reacts spontaneously with NADH to produce FMN. Requires the flavin reductase RutF to regenerate FMN in vivo. This chain is Pyrimidine monooxygenase RutA, found in Escherichia coli O157:H7 (strain EC4115 / EHEC).